Here is a 127-residue protein sequence, read N- to C-terminus: Large ribosomal subunit protein bL17 (127 aa).

It belongs to the bacterial ribosomal protein bL17 family. In terms of assembly, part of the 50S ribosomal subunit. Contacts protein L32.

This is Large ribosomal subunit protein bL17 from Salmonella paratyphi A (strain AKU_12601).